The chain runs to 118 residues: Small ribosomal subunit protein uS13 (118 aa).

A disordered region spans residues 94–118; that stretch reads SLPLRGQRTKTNARTRKGPRKPIRK.

Belongs to the universal ribosomal protein uS13 family. As to quaternary structure, part of the 30S ribosomal subunit. Forms a loose heterodimer with protein S19. Forms two bridges to the 50S subunit in the 70S ribosome.

In terms of biological role, located at the top of the head of the 30S subunit, it contacts several helices of the 16S rRNA. In the 70S ribosome it contacts the 23S rRNA (bridge B1a) and protein L5 of the 50S subunit (bridge B1b), connecting the 2 subunits; these bridges are implicated in subunit movement. Contacts the tRNAs in the A and P-sites. The chain is Small ribosomal subunit protein uS13 from Shewanella frigidimarina (strain NCIMB 400).